Reading from the N-terminus, the 207-residue chain is Low-molecular weight cobalt-containing nitrile hydratase subunit alpha (207 aa).

Positions 109, 112, 113, and 114 each coordinate Co(3+).

This sequence belongs to the nitrile hydratase subunit alpha family. In terms of assembly, heterodimer of an alpha and a beta chain. Requires Co(3+) as cofactor.

The enzyme catalyses an aliphatic primary amide = an aliphatic nitrile + H2O. Its function is as follows. NHase catalyzes the hydration of various nitrile compounds to the corresponding amides. The protein is Low-molecular weight cobalt-containing nitrile hydratase subunit alpha of Rhodococcus rhodochrous.